A 164-amino-acid polypeptide reads, in one-letter code: B-phycoerythrin alpha chain (164 aa).

(2R,3E)-phycoerythrobilin-binding residues include Cys-82 and Cys-139.

The protein belongs to the phycobiliprotein family. In terms of assembly, heteromer of 6 alpha, 6 beta and one gamma chain. In terms of processing, contains two covalently linked bilin chromophores.

The protein resides in the plastid. Its subcellular location is the chloroplast thylakoid membrane. Light-harvesting photosynthetic bile pigment-protein from the phycobiliprotein complex. This is B-phycoerythrin alpha chain (cpeA) from Porphyridium purpureum (Red alga).